Consider the following 304-residue polypeptide: Homoserine kinase (304 aa).

90-100 (PLARGLGSSAS) contributes to the ATP binding site.

This sequence belongs to the GHMP kinase family. Homoserine kinase subfamily.

It localises to the cytoplasm. The catalysed reaction is L-homoserine + ATP = O-phospho-L-homoserine + ADP + H(+). The protein operates within amino-acid biosynthesis; L-threonine biosynthesis; L-threonine from L-aspartate: step 4/5. In terms of biological role, catalyzes the ATP-dependent phosphorylation of L-homoserine to L-homoserine phosphate. In Staphylococcus aureus (strain bovine RF122 / ET3-1), this protein is Homoserine kinase.